The primary structure comprises 279 residues: Movement protein (279 aa).

It belongs to the cucumovirus movement protein family.

It localises to the host cell junction. The protein localises to the host plasmodesma. In terms of biological role, transports viral genome to neighboring plant cells directly through plasmosdesmata, without any budding. The movement protein allows efficient cell to cell propagation, by bypassing the host cell wall barrier. Acts by forming a tubular structure at the host plasmodesmata, enlarging it enough to allow free passage of virion capsids. In Cucumber mosaic virus (strain As) (CMV), this protein is Movement protein.